Here is a 332-residue protein sequence, read N- to C-terminus: 5,10-methylenetetrahydromethanopterin reductase (332 aa).

This sequence belongs to the mer family.

Its subcellular location is the cytoplasm. The catalysed reaction is 5-methyl-5,6,7,8-tetrahydromethanopterin + oxidized coenzyme F420-(gamma-L-Glu)(n) + H(+) = 5,10-methylenetetrahydromethanopterin + reduced coenzyme F420-(gamma-L-Glu)(n). Its pathway is metabolic intermediate metabolism; lactate oxidation. In terms of biological role, catalyzes the oxidation of methyl-H(4)MPT to methylene-H(4)MPT. This chain is 5,10-methylenetetrahydromethanopterin reductase, found in Archaeoglobus fulgidus (strain ATCC 49558 / DSM 4304 / JCM 9628 / NBRC 100126 / VC-16).